Here is a 348-residue protein sequence, read N- to C-terminus: Phosphoribosylformylglycinamidine cyclo-ligase (348 aa).

Belongs to the AIR synthase family.

The protein localises to the cytoplasm. It catalyses the reaction 2-formamido-N(1)-(5-O-phospho-beta-D-ribosyl)acetamidine + ATP = 5-amino-1-(5-phospho-beta-D-ribosyl)imidazole + ADP + phosphate + H(+). It participates in purine metabolism; IMP biosynthesis via de novo pathway; 5-amino-1-(5-phospho-D-ribosyl)imidazole from N(2)-formyl-N(1)-(5-phospho-D-ribosyl)glycinamide: step 2/2. This Geobacter sp. (strain M21) protein is Phosphoribosylformylglycinamidine cyclo-ligase.